Here is an 827-residue protein sequence, read N- to C-terminus: Translation initiation factor IF-2 (827 aa).

A disordered region spans residues 49-205 (ALNREKEEKE…GAPDKKREWE (157 aa)). 6 stretches are compositionally biased toward basic and acidic residues: residues 50 to 73 (LNREKEEKEKKEQEKKQVEQKAEA), 96 to 106 (RPREQRSDRPQ), 116 to 129 (PEPRDKDKGRRPGE), 137 to 150 (RPRDDRRRFDKERG), 157 to 168 (FGEKKERPPFPR), and 182 to 205 (EAPKGENKEPERRKGAPDKKREWE). Positions 326–495 (PRPPIVTVMG…LLVADLKELK (170 aa)) constitute a tr-type G domain. The interval 335 to 342 (GHVDHGKT) is G1. GTP is bound at residue 335–342 (GHVDHGKT). Positions 360–364 (GITQH) are G2. A G3 region spans residues 381–384 (DTPG). GTP is bound by residues 381–385 (DTPGH) and 435–438 (NKID). The tract at residues 435–438 (NKID) is G4. The tract at residues 471 to 473 (SAL) is G5.

This sequence belongs to the TRAFAC class translation factor GTPase superfamily. Classic translation factor GTPase family. IF-2 subfamily.

The protein resides in the cytoplasm. One of the essential components for the initiation of protein synthesis. Protects formylmethionyl-tRNA from spontaneous hydrolysis and promotes its binding to the 30S ribosomal subunits. Also involved in the hydrolysis of GTP during the formation of the 70S ribosomal complex. In Carboxydothermus hydrogenoformans (strain ATCC BAA-161 / DSM 6008 / Z-2901), this protein is Translation initiation factor IF-2.